Reading from the N-terminus, the 2179-residue chain is Axotactin (2179 aa).

Residues 1 to 18 (MAFPYIWALLPLICSASG) form the signal peptide. At 19–1816 (LSLPNMTSTD…DENKQEDSTQ (1798 aa)) the chain is on the extracellular side. Asn23 and Asn52 each carry an N-linked (GlcNAc...) asparagine glycan. The disordered stretch occupies residues 59-107 (GGLAGSSTGGQSLPDTGGGNSAGGSPAGGSSGTGGGGSNSGISGNNSAM). A compositionally biased stretch (gly residues) spans 74–97 (TGGGNSAGGSPAGGSSGTGGGGSN). Residue Asn103 is glycosylated (N-linked (GlcNAc...) asparagine). The region spanning 119-170 (CAGPGDPGPCKQYIYKWRYEPTTNECTNFIWGGCEGNPQNRFGTEAECLFHC) is the BPTI/Kunitz inhibitor domain. Cystine bridges form between Cys119-Cys170, Cys128-Cys152, and Cys144-Cys166. The interval 201-220 (YTQSPAQSPDGMGGAEGGDG) is disordered. A compositionally biased stretch (gly residues) spans 211 to 220 (GMGGAEGGDG). The 197-residue stretch at 242 to 438 (KTFIFAKNNT…TKHENVNEGC (197 aa)) folds into the Laminin G-like 1 domain. The N-linked (GlcNAc...) asparagine glycan is linked to Asn249. Cystine bridges form between Cys405/Cys438, Cys442/Cys455, Cys449/Cys464, and Cys466/Cys476. Residues 439 to 477 (SDMCESRHNLCFVGSRCINHYGGISCDCFGTHYEGEHCD) enclose the EGF-like 1 domain. Laminin G-like domains are found at residues 481-664 (ATII…AEFV) and 660-839 (EAEF…LDNC). 3 N-linked (GlcNAc...) asparagine glycosylation sites follow: Asn542, Asn571, and Asn741. Disulfide bonds link Cys808/Cys839, Cys845/Cys857, Cys851/Cys866, and Cys868/Cys878. Positions 841–879 (YIDPCKRPNTCEHGGKCFVKDDRVTCDCKHTGYIGKNCH) constitute an EGF-like 2 domain. Residues Asn925, Asn1000, Asn1019, and Asn1026 are each glycosylated (N-linked (GlcNAc...) asparagine). Residues 1087–1259 (YVVTFTTSQS…VHLSEIIKDC (173 aa)) enclose the Laminin G-like 4 domain. Intrachain disulfides connect Cys1231/Cys1259, Cys1263/Cys1274, Cys1268/Cys1283, and Cys1285/Cys1296. The EGF-like 3 domain maps to 1260–1297 (KPSCVPSPCRNGAQCKELWSSFKCVCNNPWAHIGEFCE). Positions 1316–1526 (RNYLSVGATP…PTQEGVLPNC (211 aa)) constitute a Laminin G-like 5 domain. Asn1393 carries an N-linked (GlcNAc...) asparagine glycan. Disulfide bonds link Cys1494–Cys1526, Cys1530–Cys1541, Cys1535–Cys1552, and Cys1554–Cys1564. An EGF-like 4 domain is found at 1527–1565 (QIKCDAEPCKNGGTCQEHFAEQLSTCDCEHTSFLGEFCS). The Laminin G-like 6 domain occupies 1569–1765 (GADFSGESTL…NPQGVRSAQC (197 aa)). Asn1667, Asn1707, Asn1751, and Asn1782 each carry an N-linked (GlcNAc...) asparagine glycan. The cysteines at positions 1722 and 1765 are disulfide-linked. A helical transmembrane segment spans residues 1817–1837 (VVFLTLTSVFVIIVICCLLEV). The Cytoplasmic segment spans residues 1838–2179 (YRSHLAYKKR…TSIDSILSLD (342 aa)). Disordered regions lie at residues 1891-2141 (YTYK…PTLF) and 2156-2179 (SYLG…LSLD). Residues 1916–1930 (GSATPSQPGTPTALS) are compositionally biased toward polar residues. Residues 1940–1949 (EEEEEEEDEA) are compositionally biased toward acidic residues. Over residues 1954-1966 (AAEKSGENEEPPA) the composition is skewed to basic and acidic residues. Polar residues-rich tracts occupy residues 1969–1981 (TTAS…QAQP) and 2010–2025 (EPSS…QLAQ). A compositionally biased stretch (basic and acidic residues) spans 2064 to 2079 (PQEHKSRHKATDDTEA). The segment covering 2082–2091 (QQQQQQQQQQ) has biased composition (low complexity). 2 stretches are compositionally biased toward polar residues: residues 2092-2105 (SFDV…SSLP) and 2165-2179 (PRSN…LSLD).

Its subcellular location is the cell projection. The protein resides in the axon. The protein localises to the membrane. Its function is as follows. May have serine protease inhibitor activity. Might play a role in the glial-neuronal signaling pathway that is important in establishing the electrical properties of axonal membranes. The chain is Axotactin from Drosophila melanogaster (Fruit fly).